A 273-amino-acid chain; its full sequence is Dermonecrotic toxin LapSicTox-alphaIB1c (273 aa).

The active site involves histidine 5. Residues glutamate 25 and aspartate 27 each coordinate Mg(2+). The Nucleophile role is filled by histidine 41. Intrachain disulfides connect cysteine 45–cysteine 51 and cysteine 47–cysteine 190. Mg(2+) is bound at residue aspartate 85. Asparagine 250 carries N-linked (GlcNAc...) asparagine glycosylation.

The protein belongs to the arthropod phospholipase D family. Class II subfamily. Mg(2+) serves as cofactor. In terms of tissue distribution, expressed by the venom gland.

It is found in the secreted. The enzyme catalyses an N-(acyl)-sphingosylphosphocholine = an N-(acyl)-sphingosyl-1,3-cyclic phosphate + choline. It carries out the reaction an N-(acyl)-sphingosylphosphoethanolamine = an N-(acyl)-sphingosyl-1,3-cyclic phosphate + ethanolamine. The catalysed reaction is a 1-acyl-sn-glycero-3-phosphocholine = a 1-acyl-sn-glycero-2,3-cyclic phosphate + choline. It catalyses the reaction a 1-acyl-sn-glycero-3-phosphoethanolamine = a 1-acyl-sn-glycero-2,3-cyclic phosphate + ethanolamine. Functionally, dermonecrotic toxins cleave the phosphodiester linkage between the phosphate and headgroup of certain phospholipids (sphingolipid and lysolipid substrates), forming an alcohol (often choline) and a cyclic phosphate. This toxin acts on sphingomyelin (SM). It may also act on ceramide phosphoethanolamine (CPE), lysophosphatidylcholine (LPC) and lysophosphatidylethanolamine (LPE), but not on lysophosphatidylserine (LPS), and lysophosphatidylglycerol (LPG). It acts by transphosphatidylation, releasing exclusively cyclic phosphate products as second products. Induces dermonecrosis, hemolysis, increased vascular permeability, edema, inflammatory response, and platelet aggregation. The chain is Dermonecrotic toxin LapSicTox-alphaIB1c from Loxosceles apachea (Apache recluse spider).